The chain runs to 299 residues: Acetaldehyde dehydrogenase (299 aa).

The active-site Acyl-thioester intermediate is Cys126. Residues 157–165 and Asn267 each bind NAD(+); that span reads SAGPGTRQN.

The protein belongs to the acetaldehyde dehydrogenase family.

It carries out the reaction acetaldehyde + NAD(+) + CoA = acetyl-CoA + NADH + H(+). The polypeptide is Acetaldehyde dehydrogenase (mhpF) (Carboxydothermus hydrogenoformans (strain ATCC BAA-161 / DSM 6008 / Z-2901)).